Here is a 224-residue protein sequence, read N- to C-terminus: UPF0758 protein SPO0054 (224 aa).

In terms of domain architecture, MPN spans 102-224 (VISSWDALLD…ELSFRAEGYL (123 aa)). Zn(2+) contacts are provided by His-173, His-175, and Asp-186. Residues 173 to 186 (HNHPSGDPTPSQSD) carry the JAMM motif motif.

This sequence belongs to the UPF0758 family.

The chain is UPF0758 protein SPO0054 from Ruegeria pomeroyi (strain ATCC 700808 / DSM 15171 / DSS-3) (Silicibacter pomeroyi).